The following is a 201-amino-acid chain: Small ribosomal subunit protein uS4 (201 aa).

Residues Cys-93–Asn-155 enclose the S4 RNA-binding domain.

This sequence belongs to the universal ribosomal protein uS4 family. As to quaternary structure, part of the 30S ribosomal subunit. Contacts protein S5. The interaction surface between S4 and S5 is involved in control of translational fidelity.

Functionally, one of the primary rRNA binding proteins, it binds directly to 16S rRNA where it nucleates assembly of the body of the 30S subunit. With S5 and S12 plays an important role in translational accuracy. In Elusimicrobium minutum (strain Pei191), this protein is Small ribosomal subunit protein uS4.